The sequence spans 321 residues: Lipoyl synthase (321 aa).

Positions 68, 73, 79, 94, 98, 101, and 308 each coordinate [4Fe-4S] cluster. Residues 80-297 (FNHGTATFMI…KAEALAMGFT (218 aa)) form the Radical SAM core domain.

This sequence belongs to the radical SAM superfamily. Lipoyl synthase family. Requires [4Fe-4S] cluster as cofactor.

It localises to the cytoplasm. The enzyme catalyses [[Fe-S] cluster scaffold protein carrying a second [4Fe-4S](2+) cluster] + N(6)-octanoyl-L-lysyl-[protein] + 2 oxidized [2Fe-2S]-[ferredoxin] + 2 S-adenosyl-L-methionine + 4 H(+) = [[Fe-S] cluster scaffold protein] + N(6)-[(R)-dihydrolipoyl]-L-lysyl-[protein] + 4 Fe(3+) + 2 hydrogen sulfide + 2 5'-deoxyadenosine + 2 L-methionine + 2 reduced [2Fe-2S]-[ferredoxin]. The protein operates within protein modification; protein lipoylation via endogenous pathway; protein N(6)-(lipoyl)lysine from octanoyl-[acyl-carrier-protein]: step 2/2. Catalyzes the radical-mediated insertion of two sulfur atoms into the C-6 and C-8 positions of the octanoyl moiety bound to the lipoyl domains of lipoate-dependent enzymes, thereby converting the octanoylated domains into lipoylated derivatives. This is Lipoyl synthase from Edwardsiella ictaluri (strain 93-146).